The sequence spans 310 residues: Acetyl-coenzyme A carboxylase carboxyl transferase subunit alpha (310 aa).

The region spanning 31–285 (SFERELRIIN…KQKILRRLKQ (255 aa)) is the CoA carboxyltransferase C-terminal domain.

It belongs to the AccA family. As to quaternary structure, acetyl-CoA carboxylase is a heterohexamer composed of biotin carboxyl carrier protein (accB), biotin carboxylase (accC) and two subunits each of ACCase subunit alpha (accA) and ACCase subunit beta (accD).

The protein localises to the plastid. Its subcellular location is the chloroplast. It carries out the reaction N(6)-carboxybiotinyl-L-lysyl-[protein] + acetyl-CoA = N(6)-biotinyl-L-lysyl-[protein] + malonyl-CoA. Its pathway is lipid metabolism; malonyl-CoA biosynthesis; malonyl-CoA from acetyl-CoA: step 1/1. Functionally, component of the acetyl coenzyme A carboxylase (ACC) complex. First, biotin carboxylase catalyzes the carboxylation of biotin on its carrier protein (BCCP) and then the CO(2) group is transferred by the carboxyltransferase to acetyl-CoA to form malonyl-CoA. The chain is Acetyl-coenzyme A carboxylase carboxyl transferase subunit alpha from Cyanidioschyzon merolae (strain NIES-3377 / 10D) (Unicellular red alga).